A 272-amino-acid polypeptide reads, in one-letter code: Dermonecrotic toxin LvSicTox-alphaIC1biv (272 aa).

The active site involves His-5. Positions 25 and 27 each coordinate Mg(2+). The active-site Nucleophile is the His-41. Intrachain disulfides connect Cys-45–Cys-51 and Cys-47–Cys-189. Asp-84 provides a ligand contact to Mg(2+).

This sequence belongs to the arthropod phospholipase D family. Class II subfamily. It depends on Mg(2+) as a cofactor. Expressed by the venom gland.

It localises to the secreted. The enzyme catalyses an N-(acyl)-sphingosylphosphocholine = an N-(acyl)-sphingosyl-1,3-cyclic phosphate + choline. The catalysed reaction is an N-(acyl)-sphingosylphosphoethanolamine = an N-(acyl)-sphingosyl-1,3-cyclic phosphate + ethanolamine. It carries out the reaction a 1-acyl-sn-glycero-3-phosphocholine = a 1-acyl-sn-glycero-2,3-cyclic phosphate + choline. It catalyses the reaction a 1-acyl-sn-glycero-3-phosphoethanolamine = a 1-acyl-sn-glycero-2,3-cyclic phosphate + ethanolamine. Its function is as follows. Dermonecrotic toxins cleave the phosphodiester linkage between the phosphate and headgroup of certain phospholipids (sphingolipid and lysolipid substrates), forming an alcohol (often choline) and a cyclic phosphate. This toxin acts on sphingomyelin (SM). It may also act on ceramide phosphoethanolamine (CPE), lysophosphatidylcholine (LPC) and lysophosphatidylethanolamine (LPE), but not on lysophosphatidylserine (LPS), and lysophosphatidylglycerol (LPG). It acts by transphosphatidylation, releasing exclusively cyclic phosphate products as second products. Induces dermonecrosis, hemolysis, increased vascular permeability, edema, inflammatory response, and platelet aggregation. This Loxosceles variegata (Recluse spider) protein is Dermonecrotic toxin LvSicTox-alphaIC1biv.